We begin with the raw amino-acid sequence, 311 residues long: Small ribosomal subunit biogenesis GTPase RsgA (311 aa).

Residues 88–246 (SKEKEQVIAA…VIDTPGIREF (159 aa)) form the CP-type G domain. Residues 137–140 (NKID) and 188–196 (GHSGVGKST) contribute to the GTP site. Zn(2+) is bound by residues Cys270, Cys275, His277, and Cys283.

The protein belongs to the TRAFAC class YlqF/YawG GTPase family. RsgA subfamily. As to quaternary structure, monomer. Associates with 30S ribosomal subunit, binds 16S rRNA. Requires Zn(2+) as cofactor.

The protein localises to the cytoplasm. In terms of biological role, one of several proteins that assist in the late maturation steps of the functional core of the 30S ribosomal subunit. Helps release RbfA from mature subunits. May play a role in the assembly of ribosomal proteins into the subunit. Circularly permuted GTPase that catalyzes slow GTP hydrolysis, GTPase activity is stimulated by the 30S ribosomal subunit. This Chlorobaculum parvum (strain DSM 263 / NCIMB 8327) (Chlorobium vibrioforme subsp. thiosulfatophilum) protein is Small ribosomal subunit biogenesis GTPase RsgA.